The following is a 750-amino-acid chain: Photosystem I P700 chlorophyll a apoprotein A1 (750 aa).

8 consecutive transmembrane segments (helical) span residues Val70 to Ala93, Leu156 to His179, Leu195 to Leu219, Ile291 to Tyr309, Trp346 to Tyr369, Leu385 to Val411, Ala433 to His455, and Phe531 to Leu549. Residues Cys573 and Cys582 each contribute to the [4Fe-4S] cluster site. The next 2 membrane-spanning stretches (helical) occupy residues His589–Trp610 and Leu664–Phe686. Chlorophyll a' is bound at residue His675. Residues Met683 and Tyr691 each contribute to the chlorophyll a site. A phylloquinone-binding site is contributed by Trp692. The chain crosses the membrane as a helical span at residues Ala724 to Ala744.

This sequence belongs to the PsaA/PsaB family. As to quaternary structure, the PsaA/B heterodimer binds the P700 chlorophyll special pair and subsequent electron acceptors. PSI consists of a core antenna complex that captures photons, and an electron transfer chain that converts photonic excitation into a charge separation. The eukaryotic PSI reaction center is composed of at least 11 subunits. It depends on P700 is a chlorophyll a/chlorophyll a' dimer, A0 is one or more chlorophyll a, A1 is one or both phylloquinones and FX is a shared 4Fe-4S iron-sulfur center. as a cofactor.

It localises to the plastid. The protein localises to the chloroplast thylakoid membrane. The enzyme catalyses reduced [plastocyanin] + hnu + oxidized [2Fe-2S]-[ferredoxin] = oxidized [plastocyanin] + reduced [2Fe-2S]-[ferredoxin]. PsaA and PsaB bind P700, the primary electron donor of photosystem I (PSI), as well as the electron acceptors A0, A1 and FX. PSI is a plastocyanin-ferredoxin oxidoreductase, converting photonic excitation into a charge separation, which transfers an electron from the donor P700 chlorophyll pair to the spectroscopically characterized acceptors A0, A1, FX, FA and FB in turn. Oxidized P700 is reduced on the lumenal side of the thylakoid membrane by plastocyanin. The chain is Photosystem I P700 chlorophyll a apoprotein A1 from Coffea arabica (Arabian coffee).